The primary structure comprises 376 residues: MGDRERNKKRLLELLQAAGTGNGHCADCGAADPDWASYKLGVFICLHCSGVHRNFPDISKVKSVRLDFWDDSMVEFMTHNGNLSVKAKFEARVPTFYYVPQASDCLVLKEQWIRAKYERQEFMAEKAVSPPGDREGFLWKRGRDNSQFLRRRFVLLSREGLLKYYTKEEGKTPKAIINIKDLNATFQTEKIGHPHGLQITYRKEGQTRNLFVYHDSGKEIVDWFNALRAARLQYLKLAFPDLPESELVPLITRNYLKQGFMEKTGPKHREPFKKRWFALDPQERRLLYYKNPLDAFEQGQVFLGSNEQGYEVWEGLPQGIRGNRWKVGLTVITPERKFVFTCPTEKEQREWLESLRGVLSSPLSPLHLLTTSAKSG.

In terms of domain architecture, Arf-GAP spans 9–130; the sequence is KRLLELLQAA…EFMAEKAVSP (122 aa). Residues 25 to 48 form a C4-type zinc finger; it reads CADCGAADPDWASYKLGVFICLHC. 2 PH domains span residues 131-232 and 254-360; these read PGDR…AARL and NYLK…GVLS.

Expressed in many tissues, with highest levels in fat, heart and skeletal muscle. Also detected in kidney, liver and lung.

The protein localises to the cytoplasm. It is found in the cell membrane. Its function is as follows. GTPase-activating protein for the ADP ribosylation factor family (Potential). Binds phosphatidylinositol 4,5-bisphosphate, phosphatidylinositol 3,4,5-trisphosphate (PtdInsP3) and inositol 1,3,4,5-tetrakisphosphate (InsP4). Binding of phosphatidylinositol 3,5-bisphosphate and phosphatidylinositol 3,4-bisphosphate occurs at a much lower affinity. Possesses a stoichiometry of two binding sites for InsP4 with identical affinity. The protein is Arf-GAP with dual PH domain-containing protein 2 (Adap2) of Rattus norvegicus (Rat).